The primary structure comprises 367 residues: Peptide chain release factor 2 (367 aa).

Gln254 is subject to N5-methylglutamine.

The protein belongs to the prokaryotic/mitochondrial release factor family. Post-translationally, methylated by PrmC. Methylation increases the termination efficiency of RF2.

The protein resides in the cytoplasm. In terms of biological role, peptide chain release factor 2 directs the termination of translation in response to the peptide chain termination codons UGA and UAA. This chain is Peptide chain release factor 2, found in Aromatoleum aromaticum (strain DSM 19018 / LMG 30748 / EbN1) (Azoarcus sp. (strain EbN1)).